The following is a 269-amino-acid chain: NAD kinase (269 aa).

Aspartate 45 (proton acceptor) is an active-site residue. Residues aspartate 45–glycine 46, asparagine 122–glutamate 123, arginine 149, aspartate 151, and alanine 186 each bind NAD(+).

It belongs to the NAD kinase family. A divalent metal cation serves as cofactor.

It is found in the cytoplasm. The catalysed reaction is NAD(+) + ATP = ADP + NADP(+) + H(+). In terms of biological role, involved in the regulation of the intracellular balance of NAD and NADP, and is a key enzyme in the biosynthesis of NADP. Catalyzes specifically the phosphorylation on 2'-hydroxyl of the adenosine moiety of NAD to yield NADP. In Staphylococcus haemolyticus (strain JCSC1435), this protein is NAD kinase.